The chain runs to 441 residues: Xylose isomerase (441 aa).

Catalysis depends on residues His-100 and Asp-103. Residues Glu-231, Glu-267, His-270, Asp-295, Asp-306, Asp-308, and Asp-338 each coordinate Mg(2+).

This sequence belongs to the xylose isomerase family. In terms of assembly, homotetramer. Mg(2+) serves as cofactor.

Its subcellular location is the cytoplasm. The enzyme catalyses alpha-D-xylose = alpha-D-xylulofuranose. The polypeptide is Xylose isomerase (Paraburkholderia phymatum (strain DSM 17167 / CIP 108236 / LMG 21445 / STM815) (Burkholderia phymatum)).